Consider the following 932-residue polypeptide: Leucine--tRNA ligase (932 aa).

The 'HIGH' region signature appears at 38-48; the sequence is PYLNGNLHAGH. The short motif at 630 to 634 is the 'KMSKS' region element; sequence KMSKS. Lysine 633 contacts ATP.

This sequence belongs to the class-I aminoacyl-tRNA synthetase family.

It localises to the cytoplasm. The catalysed reaction is tRNA(Leu) + L-leucine + ATP = L-leucyl-tRNA(Leu) + AMP + diphosphate. In Archaeoglobus fulgidus (strain ATCC 49558 / DSM 4304 / JCM 9628 / NBRC 100126 / VC-16), this protein is Leucine--tRNA ligase.